The primary structure comprises 233 residues: Leucyl/phenylalanyl-tRNA--protein transferase (233 aa).

The protein belongs to the L/F-transferase family.

It is found in the cytoplasm. The enzyme catalyses N-terminal L-lysyl-[protein] + L-leucyl-tRNA(Leu) = N-terminal L-leucyl-L-lysyl-[protein] + tRNA(Leu) + H(+). It catalyses the reaction N-terminal L-arginyl-[protein] + L-leucyl-tRNA(Leu) = N-terminal L-leucyl-L-arginyl-[protein] + tRNA(Leu) + H(+). It carries out the reaction L-phenylalanyl-tRNA(Phe) + an N-terminal L-alpha-aminoacyl-[protein] = an N-terminal L-phenylalanyl-L-alpha-aminoacyl-[protein] + tRNA(Phe). Functions in the N-end rule pathway of protein degradation where it conjugates Leu, Phe and, less efficiently, Met from aminoacyl-tRNAs to the N-termini of proteins containing an N-terminal arginine or lysine. This Anaeromyxobacter dehalogenans (strain 2CP-C) protein is Leucyl/phenylalanyl-tRNA--protein transferase.